We begin with the raw amino-acid sequence, 120 residues long: Transmembrane protein 010R (120 aa).

2 consecutive transmembrane segments (helical) span residues 40–60 and 72–92; these read FCGACLALPLAFAGAGTATAT and SIFFWSVVISIIGLIATVWFL.

The protein belongs to the IIV-6 010R family.

Its subcellular location is the membrane. The chain is Transmembrane protein 010R from Invertebrate iridescent virus 6 (IIV-6).